The sequence spans 32 residues: Secreted proteinase (32 aa).

The segment at 1–32 (DTANDPKYGSQYAPQKVNADVDQGVXXXHPEL) is disordered. Aspartate 22 acts as the Charge relay system in catalysis.

Belongs to the peptidase S8 family.

The protein localises to the secreted. This Haloferax mediterranei (Halobacterium mediterranei) protein is Secreted proteinase.